Here is a 272-residue protein sequence, read N- to C-terminus: Rhomboid-type serine protease B (272 aa).

6 helical membrane passes run 30-50 (LVLLVILAFWLLELQTIWSVV), 72-92 (PFIHVGFFHAFVNLLALTPLL), 103-123 (TAVALFIGPLSTFPAGIYILV), 133-153 (AVVGASVWIFLLLGSEAIKTF), 164-184 (TKIPTWTSPLFACALVSIFVP), and 186-206 (TSFLGHLSAIIIGYLLGLGYL). The Nucleophile role is filled by Ser138. Residue His191 is part of the active site.

The protein belongs to the peptidase S54 family.

It localises to the membrane. The enzyme catalyses Cleaves type-1 transmembrane domains using a catalytic dyad composed of serine and histidine that are contributed by different transmembrane domains.. In terms of biological role, rhomboid protease that catalyzes intramembrane proteolysis. Required for transcription factor srbA activation by mediating its release from the membrane and thereby regulating its activity under hypoxic conditions. Essential for iron homeostasis and resistance to azoles such as voriconazole. Required for virulence in murine models of invasive pulmonary aspergillosis (IPA). The protein is Rhomboid-type serine protease B of Aspergillus fumigatus (strain ATCC MYA-4609 / CBS 101355 / FGSC A1100 / Af293) (Neosartorya fumigata).